The primary structure comprises 236 residues: UPF0502 protein BceJ2315_62050 (236 aa).

Belongs to the UPF0502 family.

This chain is UPF0502 protein BceJ2315_62050, found in Burkholderia cenocepacia (strain ATCC BAA-245 / DSM 16553 / LMG 16656 / NCTC 13227 / J2315 / CF5610) (Burkholderia cepacia (strain J2315)).